The chain runs to 1248 residues: Cullin-associated NEDD8-dissociated protein 1 (1248 aa).

HEAT repeat units follow at residues 44 to 82, 127 to 165, 168 to 206, 365 to 403, 425 to 463, 510 to 548, 604 to 642, 644 to 682, 861 to 900, 976 to 1014, and 1054 to 1093; these read DESE…KVKE, PNVC…RFGE, VPFH…QANS, EDFY…NTRL, IEQL…SLPG, HPHI…VIRP, QNEL…LRID, TPIL…NYSS, DLSS…GSLQ, LVNP…DQPQ, and PSLV…TVDD.

This sequence belongs to the CAND family.

Its function is as follows. Key assembly factor of SCF (SKP1-CUL1-F-box protein) E3 ubiquitin ligase complexes that promotes the exchange of the substrate-recognition F-box subunit in SCF complexes, thereby playing a key role in the cellular repertoire of SCF complexes. Acts as a F-box protein exchange factor. Probably plays a similar role in other cullin-RING E3 ubiquitin ligase complexes. The polypeptide is Cullin-associated NEDD8-dissociated protein 1 (Cand1) (Drosophila melanogaster (Fruit fly)).